The sequence spans 169 residues: Ribosome maturation factor RimM (169 aa).

The 73-residue stretch at 97-169 folds into the PRC barrel domain; sequence EDEVYFKDLI…KIVVDWEYDY (73 aa).

The protein belongs to the RimM family. In terms of assembly, binds ribosomal protein uS19.

It is found in the cytoplasm. Functionally, an accessory protein needed during the final step in the assembly of 30S ribosomal subunit, possibly for assembly of the head region. Essential for efficient processing of 16S rRNA. May be needed both before and after RbfA during the maturation of 16S rRNA. It has affinity for free ribosomal 30S subunits but not for 70S ribosomes. In Francisella tularensis subsp. tularensis (strain WY96-3418), this protein is Ribosome maturation factor RimM.